Reading from the N-terminus, the 1058-residue chain is Bromodomain-containing protein 1 (1058 aa).

Residues 1 to 12 show a composition bias toward basic residues; sequence MRRKGRCHRGSA. The tract at residues 1–25 is disordered; sequence MRRKGRCHRGSAARHPSSPCSIKHS. An interaction with KAT7/HBO1 and histones region spans residues 31–80; it reads LTYAQAQRMVEIEIEGRLHRISIFDPLEIILEDDLTAQEMSECNSNKENS. Serine 128 is subject to Phosphoserine. The PHD-type 1 zinc-finger motif lies at 214–264; sequence DAVCCICMDGECQNSNVILFCDMCNLAVHQECYGVPYIPEGQWLCRHCLQS. Residues 268-301 form a C2HC pre-PHD-type zinc finger; that stretch reads PADCVLCPNKGGAFKKTDDDRWGHVVCALWIPEV. A PHD-type 2 zinc finger spans residues 325–389; the sequence is LTCYLCKQKG…RKTAYCDVHT (65 aa). N6-acetyllysine is present on residues lysine 368, lysine 516, and lysine 519. Residues lysine 554 and lysine 594 each participate in a glycyl lysine isopeptide (Lys-Gly) (interchain with G-Cter in SUMO2) cross-link. One can recognise a Bromo domain in the interval 562–666; that stretch reads LRLTPLTVLL…DQGGVVLRQA (105 aa). Residues 754 to 763 are compositionally biased toward polar residues; sequence KLSQQHSQAP. Disordered stretches follow at residues 754 to 776 and 791 to 847; these read KLSQQHSQAPPTGAGTGGFEDEA and LETL…AAPR. Residue serine 803 is modified to Phosphoserine. Lysine 903 carries the post-translational modification N6-acetyllysine. Residues 929-1012 enclose the PWWP domain; sequence PLKVVWAKCS…KSKMVPLGVD (84 aa). A phosphoserine mark is found at serine 1052 and serine 1055.

As to quaternary structure, component of some HBO1 complexes composed of KAT7/HBO1, MEAF6, ING4 and BRD1/BRPF2. Component of the MOZ/MORF complex composed at least of ING5, KAT6A, KAT6B, MEAF6 and one of BRPF1, BRD1/BRPF2 and BRPF3. Interacts (via PHD-type zinc finger domain) with unmodified histone H3. Interacts (via PWWP domain) with dimethylated and trimethylated 'Lys-79' on histone H3.

Its subcellular location is the nucleus. It is found in the chromosome. In terms of biological role, scaffold subunit of various histone acetyltransferase (HAT) complexes, such as the MOZ/MORF and HBO1 complexes, that acts as a regulator of hematopoiesis. Plays a key role in HBO1 complex by directing KAT7/HBO1 specificity towards histone H3 'Lys-14' acetylation (H3K14ac), thereby promoting erythroid differentiation. In Mus musculus (Mouse), this protein is Bromodomain-containing protein 1.